A 323-amino-acid polypeptide reads, in one-letter code: Sphingomyelinase D (323 aa).

A signal peptide spans 1-20 (MISLLRLCSFLAAGSILVQG). The active site involves H59. E79, D81, and D127 together coordinate Mg(2+). Residues 308–315 (ATNDDNPW) carry the SMD-tail motif.

Belongs to the sphingomyelinase D/phospholipase D family. It depends on Mg(2+) as a cofactor.

Its subcellular location is the secreted. The catalysed reaction is a sphingomyelin + H2O = an N-acylsphing-4-enine 1-phosphate + choline + H(+). Catalyzes the hydrolysis of sphingomyelin. Sphingomyelinases D are produced by some spider in their venoms, but also by arthropods such as ticks, or pathogenic bacteria and fungi. They might play a role in pathogenicity through different mechanisms, such as membrane destabilization and host cell penetration, but also pulmonary inflammation and cutaneous lesions. This Trichophyton rubrum (strain ATCC MYA-4607 / CBS 118892) (Athlete's foot fungus) protein is Sphingomyelinase D.